The primary structure comprises 353 residues: Outer membrane protein P5 (353 aa).

An N-terminal signal peptide occupies residues 1-21; sequence MKKTAIALVVAGLAAASVAQA. 8 beta stranded membrane passes run 27-37, 58-69, 77-85, 104-115, 120-128, 158-167, 172-179, and 205-213; these read TFYAGVKAGQA, SFTYGVFGGYQI, LAVELGYDD, HGAHLSLKGSYE, LDVYGKAGV, GLFAVGAEYA, LAVRLEYQ, and SINAGISYR. Positions 227 to 353 constitute an OmpA-like domain; that stretch reads VVSKTFSLNS…RVEIAVNGTK (127 aa). Residues C326 and C338 are joined by a disulfide bond.

This sequence belongs to the outer membrane OOP (TC 1.B.6) superfamily. OmpA family. As to quaternary structure, monomer and homodimer.

It is found in the cell outer membrane. In terms of biological role, with TolR probably plays a role in maintaining the position of the peptidoglycan cell wall in the periplasm. Acts as a porin with low permeability that allows slow penetration of small solutes; an internal gate slows down solute passage. The chain is Outer membrane protein P5 from Haemophilus influenzae.